A 626-amino-acid chain; its full sequence is Beta-galactosidase large subunit (626 aa).

The active-site Proton donor is the Glu466. Residue Glu534 is the Nucleophile of the active site.

The protein belongs to the glycosyl hydrolase 2 family. As to quaternary structure, heterodimer of a large (LacL) and a small subunit (LacM).

The catalysed reaction is Hydrolysis of terminal non-reducing beta-D-galactose residues in beta-D-galactosides.. In terms of biological role, component of a beta-galactosidase that displays activity with the artificial chromogenic substrate o-nitrophenyl-beta-D-galactopyranoside (ONPG). The sequence is that of Beta-galactosidase large subunit from Leuconostoc lactis.